Here is a 574-residue protein sequence, read N- to C-terminus: Sulfate adenylyltransferase (574 aa).

Positions 1 to 169 (MANTPHGGVL…LEAVNKLNHY (169 aa)) are N-terminal. The interval 170–394 (DYVGLRYTPA…LRESSPPRAL (225 aa)) is catalytic. Position 197 (Gln197) interacts with sulfate. Residues 197 to 200 (QTRN) and 291 to 294 (GRDH) contribute to the ATP site. Residues Thr198, Arg199, and Asn200 contribute to the active site. Residue Arg199 coordinates sulfate. Ala295 is a sulfate binding site. Val333 lines the ATP pocket. The allosteric regulation domain; adenylyl-sulfate kinase-like stretch occupies residues 395–574 (QGFTIFLTGY…LESEGYFERL (180 aa)). 3'-phosphoadenylyl sulfate-binding positions include 434 to 437 (DTVR), Arg451, 477 to 478 (IA), and Arg516.

It in the N-terminal section; belongs to the sulfate adenylyltransferase family. The protein in the C-terminal section; belongs to the APS kinase family. As to quaternary structure, homohexamer. Dimer of trimers.

It is found in the cytoplasm. It carries out the reaction sulfate + ATP + H(+) = adenosine 5'-phosphosulfate + diphosphate. The protein operates within sulfur metabolism; hydrogen sulfide biosynthesis; sulfite from sulfate: step 1/3. With respect to regulation, allosterically inhibited by 3'-phosphoadenosine 5'-phosphosulfate (PAPS). Functionally, catalyzes the first intracellular reaction of sulfate assimilation, forming adenosine-5'-phosphosulfate (APS) from inorganic sulfate and ATP. Plays an important role in sulfate activation as a component of the biosynthesis pathway of sulfur-containing amino acids. The polypeptide is Sulfate adenylyltransferase (Emericella nidulans (strain FGSC A4 / ATCC 38163 / CBS 112.46 / NRRL 194 / M139) (Aspergillus nidulans)).